The sequence spans 561 residues: Lipase maturation factor 1 (561 aa).

The tract at residues 1 to 32 (MAAPRESLRRRKAGAGDPEPEAPPGQGRDLKG) is disordered. The Cytoplasmic segment spans residues 1–42 (MAAPRESLRRRKAGAGDPEPEAPPGQGRDLKGRPARLRAGTF). The helical transmembrane segment at 43 to 65 (WLTRIVLLRALAFVYFVAFLVAF) threads the bilayer. The Lumenal portion of the chain corresponds to 66-120 (HQNKQLIGDRGLLPCRAYLQSVQRHFGGRVSWDALSYAPTILWLLDWSHMDANLD). Residues 121 to 144 (ALALLGLGISSFILVSGCANMVLM) traverse the membrane as a helical segment. Topologically, residues 145–200 (AALWVLYMSLVNVGQIWYSFGWESQLLETGFLGIFLCPLWTLSALPRGTPTSWVVM) are cytoplasmic. Residues 201–214 (WGFRWLIFRIMLGA) form a helical membrane-spanning segment. The Lumenal portion of the chain corresponds to 215–285 (GLIKIRGDRC…LGRRMCIVHG (71 aa)). The helical transmembrane segment at 286 to 314 (ALQVLFQVVLIISGNLSFLNWLTIVPSLA) threads the bilayer. At 315 to 360 (CFDDATLGGLFPSGPGRLKDQVLKIQEEETRGARAPRTRGSVARGT) the chain is on the cytoplasmic side. A helical membrane pass occupies residues 361-382 (VNLALGILVAWLSIPVVLNLLS). Residues 383–561 (PRQVMNSSFN…SRQWPYPEPE (179 aa)) are Lumenal-facing.

This sequence belongs to the lipase maturation factor family. In terms of assembly, interacts with LPL and SEL1L.

It is found in the endoplasmic reticulum membrane. Its function is as follows. Involved in the maturation of specific proteins in the endoplasmic reticulum. Required for maturation and transport of active lipoprotein lipase (LPL) through the secretory pathway. Each LMF1 molecule chaperones 50 or more molecules of LPL. The sequence is that of Lipase maturation factor 1 (LMF1) from Bos taurus (Bovine).